A 479-amino-acid chain; its full sequence is ATP synthase subunit beta (479 aa).

168–175 (GGAGVGKT) contacts ATP.

Belongs to the ATPase alpha/beta chains family. As to quaternary structure, F-type ATPases have 2 components, CF(1) - the catalytic core - and CF(0) - the membrane proton channel. CF(1) has five subunits: alpha(3), beta(3), gamma(1), delta(1), epsilon(1). CF(0) has three main subunits: a(1), b(2) and c(9-12). The alpha and beta chains form an alternating ring which encloses part of the gamma chain. CF(1) is attached to CF(0) by a central stalk formed by the gamma and epsilon chains, while a peripheral stalk is formed by the delta and b chains.

It localises to the cell membrane. The catalysed reaction is ATP + H2O + 4 H(+)(in) = ADP + phosphate + 5 H(+)(out). In terms of biological role, produces ATP from ADP in the presence of a proton gradient across the membrane. The catalytic sites are hosted primarily by the beta subunits. In Frankia alni (strain DSM 45986 / CECT 9034 / ACN14a), this protein is ATP synthase subunit beta.